The following is a 249-amino-acid chain: Flavin-dependent thymidylate synthase (249 aa).

Residues 7 to 235 (LDVQLIAATA…PVLFDDFHIT (229 aa)) enclose the ThyX domain. Residues 94–97 (ELVR), 105–109 (QLSQR), and Arg174 contribute to the dUMP site. FAD-binding positions include 97–99 (RHR) and Gln105. Positions 97–107 (RHRHFSFSQLS) match the ThyX motif motif. FAD-binding positions include 190–192 (NYR) and His196. Residue Arg201 coordinates dUMP. The active-site Involved in ionization of N3 of dUMP, leading to its activation is Arg201.

Belongs to the thymidylate synthase ThyX family. In terms of assembly, homotetramer. FAD serves as cofactor.

The enzyme catalyses dUMP + (6R)-5,10-methylene-5,6,7,8-tetrahydrofolate + NADPH + H(+) = dTMP + (6S)-5,6,7,8-tetrahydrofolate + NADP(+). It functions in the pathway pyrimidine metabolism; dTTP biosynthesis. Functionally, catalyzes the reductive methylation of 2'-deoxyuridine-5'-monophosphate (dUMP) to 2'-deoxythymidine-5'-monophosphate (dTMP) while utilizing 5,10-methylenetetrahydrofolate (mTHF) as the methyl donor, and NADPH and FADH(2) as the reductant. The chain is Flavin-dependent thymidylate synthase from Corynebacterium aurimucosum (strain ATCC 700975 / DSM 44827 / CIP 107346 / CN-1) (Corynebacterium nigricans).